The chain runs to 189 residues: Apolipoprotein D (189 aa).

A signal peptide spans 1–20 (MGMMLLLLSMLAGLVAEAEG). Gln-21 bears the Pyrrolidone carboxylic acid mark. 2 disulfide bridges follow: Cys-28–Cys-134 and Cys-61–Cys-185. N-linked (GlcNAc...) asparagine glycans are attached at residues Asn-65 and Asn-98.

This sequence belongs to the calycin superfamily. Lipocalin family. Homodimer.

The protein resides in the secreted. In terms of biological role, APOD occurs in the macromolecular complex with lecithin-transport and binding of bilin. Appears to be able to transport a variety of ligands in a number of different contexts. In Cavia porcellus (Guinea pig), this protein is Apolipoprotein D (APOD).